We begin with the raw amino-acid sequence, 437 residues long: GTPase Obg (437 aa).

In terms of domain architecture, Obg spans 2–160 (SMFLDTAKIK…RNLELELKVL (159 aa)). The 178-residue stretch at 161–338 (ADVGLVGFPS…LLEATAELLE (178 aa)) folds into the OBG-type G domain. GTP-binding positions include 167-174 (GFPSVGKS), 192-196 (FTTIV), 214-217 (DLPG), 284-287 (NKMD), and 319-321 (SGI). Mg(2+)-binding residues include Ser-174 and Thr-194. Positions 359 to 437 (GFNPDEPEFA…IGKFEFEFVD (79 aa)) constitute an OCT domain.

The protein belongs to the TRAFAC class OBG-HflX-like GTPase superfamily. OBG GTPase family. Monomer. Requires Mg(2+) as cofactor.

It is found in the cytoplasm. Functionally, an essential GTPase which binds GTP, GDP and possibly (p)ppGpp with moderate affinity, with high nucleotide exchange rates and a fairly low GTP hydrolysis rate. Plays a role in control of the cell cycle, stress response, ribosome biogenesis and in those bacteria that undergo differentiation, in morphogenesis control. The sequence is that of GTPase Obg from Streptococcus suis (strain 98HAH33).